The chain runs to 360 residues: UDP-N-acetylglucosamine--N-acetylmuramyl-(pentapeptide) pyrophosphoryl-undecaprenol N-acetylglucosamine transferase (360 aa).

Positions 198 and 289 each coordinate UDP-N-acetyl-alpha-D-glucosamine.

It belongs to the glycosyltransferase 28 family. MurG subfamily.

It is found in the cell membrane. It catalyses the reaction Mur2Ac(oyl-L-Ala-gamma-D-Glu-L-Lys-D-Ala-D-Ala)-di-trans,octa-cis-undecaprenyl diphosphate + UDP-N-acetyl-alpha-D-glucosamine = beta-D-GlcNAc-(1-&gt;4)-Mur2Ac(oyl-L-Ala-gamma-D-Glu-L-Lys-D-Ala-D-Ala)-di-trans,octa-cis-undecaprenyl diphosphate + UDP + H(+). It participates in cell wall biogenesis; peptidoglycan biosynthesis. In terms of biological role, cell wall formation. Catalyzes the transfer of a GlcNAc subunit on undecaprenyl-pyrophosphoryl-MurNAc-pentapeptide (lipid intermediate I) to form undecaprenyl-pyrophosphoryl-MurNAc-(pentapeptide)GlcNAc (lipid intermediate II). The chain is UDP-N-acetylglucosamine--N-acetylmuramyl-(pentapeptide) pyrophosphoryl-undecaprenol N-acetylglucosamine transferase from Streptococcus pyogenes serotype M5 (strain Manfredo).